Here is a 37-residue protein sequence, read N- to C-terminus: Large ribosomal subunit protein bL12 (37 aa).

It belongs to the bacterial ribosomal protein bL12 family. Homodimer. Part of the ribosomal stalk of the 50S ribosomal subunit. Forms a multimeric L10(L12)X complex, where L10 forms an elongated spine to which 2 to 4 L12 dimers bind in a sequential fashion. Binds GTP-bound translation factors.

In terms of biological role, forms part of the ribosomal stalk which helps the ribosome interact with GTP-bound translation factors. Is thus essential for accurate translation. This chain is Large ribosomal subunit protein bL12 (rplL), found in Clostridium pasteurianum.